A 332-amino-acid chain; its full sequence is 2,3-diketo-L-gulonate reductase (332 aa).

The active-site Proton donor is the H44. NAD(+) is bound by residues 168 to 174 (ITMVDMS), 224 to 225 (WK), and 304 to 306 (GHE).

The protein belongs to the LDH2/MDH2 oxidoreductase family. DlgD subfamily. Homodimer.

Its subcellular location is the cytoplasm. The catalysed reaction is 3-dehydro-L-gulonate + NAD(+) = 2,3-dioxo-L-gulonate + NADH + H(+). It carries out the reaction 3-dehydro-L-gulonate + NADP(+) = 2,3-dioxo-L-gulonate + NADPH + H(+). In terms of biological role, catalyzes the reduction of 2,3-diketo-L-gulonate in the presence of NADH, to form 3-keto-L-gulonate. The sequence is that of 2,3-diketo-L-gulonate reductase from Salmonella typhi.